A 477-amino-acid polypeptide reads, in one-letter code: Sucrose-6-phosphate hydrolase (477 aa).

Residues 36-39 (WMND), Gln-55, Trp-63, 98-99 (FS), 160-161 (RD), Glu-215, and Trp-298 contribute to the substrate site. Asp-39 is an active-site residue.

Belongs to the glycosyl hydrolase 32 family.

The protein localises to the cytoplasm. The catalysed reaction is Hydrolysis of terminal non-reducing beta-D-fructofuranoside residues in beta-D-fructofuranosides.. Its pathway is glycan biosynthesis; sucrose metabolism. In terms of biological role, enables the bacterium to metabolize sucrose as a sole carbon source. This is Sucrose-6-phosphate hydrolase (cscA) from Escherichia coli.